Reading from the N-terminus, the 686-residue chain is Methionine--tRNA ligase (686 aa).

Residues 15 to 25 (PYANGSIHLGH) carry the 'HIGH' region motif. Zn(2+) contacts are provided by Cys146, Cys149, Cys159, and Cys162. The short motif at 332-336 (KMSKS) is the 'KMSKS' region element. ATP is bound at residue Lys335. In terms of domain architecture, tRNA-binding spans 585-686 (AFEAVDMRIA…EGAQPGMRVM (102 aa)).

This sequence belongs to the class-I aminoacyl-tRNA synthetase family. MetG type 1 subfamily. In terms of assembly, homodimer. The cofactor is Zn(2+).

The protein resides in the cytoplasm. It catalyses the reaction tRNA(Met) + L-methionine + ATP = L-methionyl-tRNA(Met) + AMP + diphosphate. Is required not only for elongation of protein synthesis but also for the initiation of all mRNA translation through initiator tRNA(fMet) aminoacylation. This chain is Methionine--tRNA ligase, found in Aliivibrio salmonicida (strain LFI1238) (Vibrio salmonicida (strain LFI1238)).